A 1154-amino-acid chain; its full sequence is Paired amphipathic helix protein pst3 (1154 aa).

Disordered regions lie at residues methionine 1–threonine 71 and serine 91–asparagine 110. A compositionally biased stretch (basic and acidic residues) spans aspartate 9 to histidine 27. Composition is skewed to polar residues over residues serine 32–histidine 45 and glutamine 100–asparagine 110. One can recognise a PAH 1 domain in the interval arginine 111–glycine 181. Disordered stretches follow at residues glycine 199–asparagine 249 and aspartate 321–arginine 376. Residues serine 228–proline 241 show a composition bias toward low complexity. Residues proline 252–asparagine 322 form the PAH 2 domain. Composition is skewed to polar residues over residues valine 323 to proline 337 and alanine 365 to arginine 376. Positions serine 403–serine 472 constitute a PAH 3 domain. Positions asparagine 797–aspartate 824 are disordered.

The protein localises to the nucleus. The sequence is that of Paired amphipathic helix protein pst3 (pst3) from Schizosaccharomyces pombe (strain 972 / ATCC 24843) (Fission yeast).